The primary structure comprises 96 residues: Co-chaperonin GroES (96 aa).

It belongs to the GroES chaperonin family. In terms of assembly, heptamer of 7 subunits arranged in a ring. Interacts with the chaperonin GroEL.

The protein localises to the cytoplasm. In terms of biological role, together with the chaperonin GroEL, plays an essential role in assisting protein folding. The GroEL-GroES system forms a nano-cage that allows encapsulation of the non-native substrate proteins and provides a physical environment optimized to promote and accelerate protein folding. GroES binds to the apical surface of the GroEL ring, thereby capping the opening of the GroEL channel. The chain is Co-chaperonin GroES from Herminiimonas arsenicoxydans.